The chain runs to 237 residues: Uridylate kinase (237 aa).

9–12 (KLSG) is an ATP binding site. Glycine 51 provides a ligand contact to UMP. ATP contacts are provided by glycine 52 and arginine 56. UMP is bound by residues aspartate 71 and 132–139 (CGNPFFTT). Residues threonine 159, tyrosine 165, and aspartate 168 each coordinate ATP.

This sequence belongs to the UMP kinase family. As to quaternary structure, homohexamer.

The protein localises to the cytoplasm. It carries out the reaction UMP + ATP = UDP + ADP. It functions in the pathway pyrimidine metabolism; CTP biosynthesis via de novo pathway; UDP from UMP (UMPK route): step 1/1. Its activity is regulated as follows. Inhibited by UTP. Its function is as follows. Catalyzes the reversible phosphorylation of UMP to UDP. This is Uridylate kinase from Prochlorococcus marinus (strain NATL1A).